We begin with the raw amino-acid sequence, 109 residues long: Large ribosomal subunit protein uL23 (109 aa).

Belongs to the universal ribosomal protein uL23 family. As to quaternary structure, part of the 50S ribosomal subunit. Contacts protein L29, and trigger factor when it is bound to the ribosome.

Its function is as follows. One of the early assembly proteins it binds 23S rRNA. One of the proteins that surrounds the polypeptide exit tunnel on the outside of the ribosome. Forms the main docking site for trigger factor binding to the ribosome. The chain is Large ribosomal subunit protein uL23 from Aquifex pyrophilus.